The primary structure comprises 420 residues: Serine hydroxymethyltransferase (420 aa).

(6S)-5,6,7,8-tetrahydrofolate-binding positions include L121 and 125–127 (GHL). N6-(pyridoxal phosphate)lysine is present on K230. (6S)-5,6,7,8-tetrahydrofolate-binding positions include E246 and 354-356 (SPF).

Belongs to the SHMT family. In terms of assembly, homodimer. Pyridoxal 5'-phosphate is required as a cofactor.

It localises to the cytoplasm. It catalyses the reaction (6R)-5,10-methylene-5,6,7,8-tetrahydrofolate + glycine + H2O = (6S)-5,6,7,8-tetrahydrofolate + L-serine. The protein operates within one-carbon metabolism; tetrahydrofolate interconversion. Its pathway is amino-acid biosynthesis; glycine biosynthesis; glycine from L-serine: step 1/1. In terms of biological role, catalyzes the reversible interconversion of serine and glycine with tetrahydrofolate (THF) serving as the one-carbon carrier. This reaction serves as the major source of one-carbon groups required for the biosynthesis of purines, thymidylate, methionine, and other important biomolecules. Also exhibits THF-independent aldolase activity toward beta-hydroxyamino acids, producing glycine and aldehydes, via a retro-aldol mechanism. The sequence is that of Serine hydroxymethyltransferase from Rickettsia massiliae (strain Mtu5).